We begin with the raw amino-acid sequence, 91 residues long: Hepcidin-2 (91 aa).

A signal peptide spans 1–24; sequence MKLSNVFLAAVVILTCVCVFQITA. A propeptide spanning residues 25–64 is cleaved from the precursor; sequence VPFIQQVQDEHHVESEELQENQHLTEAEHRLTDPLVLFRT. Disulfide bonds link Cys-73/Cys-89, Cys-76/Cys-79, Cys-77/Cys-85, and Cys-80/Cys-88.

The protein belongs to the hepcidin family.

The protein localises to the secreted. Seems to act as a signaling molecule involved in the maintenance of iron homeostasis. Seems to be required in conjunction with HFE to regulate both intestinal iron absorption and iron storage in macrophages. May also have antimicrobial activity. The polypeptide is Hepcidin-2 (hamp2) (Danio rerio (Zebrafish)).